Here is a 1131-residue protein sequence, read N- to C-terminus: ATP-dependent helicase FUN30 (1131 aa).

The tract at residues 1–70 (MSGSHSNDED…HTSKPLPSGS (70 aa)) is disordered. The span at 16-36 (PETSSPTKVASSSPLKPTSPT) shows a compositional bias: polar residues. A CUE-like region region spans residues 76–111 (VNLAREFPDFSQTLVQAVFKSNSFNLQSARERLTRL). Residues 114–141 (QRQNWTWNKNASPKKSETPPPVKKSLPL) are disordered. The residue at position 232 (Ser232) is a Phosphoserine. 2 disordered regions span residues 242-273 (KYGR…YTES) and 327-350 (NDKD…ANES). Acidic residues predominate over residues 250 to 271 (NDEEEEESMMTDDDDASGDDYT). Residue Ser369 is modified to Phosphoserine. The interval 400–533 (DLMNLGEDDD…GDDDDDDDDE (134 aa)) is disordered. The segment covering 405–416 (GEDDDDDNDDGN) has biased composition (acidic residues). Residues 417 to 432 (NDNNNSNNNNTAGADA) show a composition bias toward low complexity. Residues 433–442 (TSKEKEDTKA) are compositionally biased toward basic and acidic residues. The residue at position 451 (Ser451) is a Phosphoserine. Acidic residues predominate over residues 480–533 (EDEDDDVDLEAIDDELPQSEHEDDDYEEEDEDYNDEEEDVEYDDGDDDDDDDDE). A Helicase ATP-binding domain is found at 584-752 (NLLYQNKMSC…MSLLEFIMPN (169 aa)). 597–604 (DDMGLGKT) is a binding site for ATP. Positions 703-706 (DEGH) match the DEGH box motif. The Helicase C-terminal domain maps to 953–1108 (ALKKLLKTII…EDKKSQDVLE (156 aa)).

Belongs to the SNF2/RAD54 helicase family. Homodimer.

It localises to the nucleus. Its subcellular location is the chromosome. The catalysed reaction is ATP + H2O = ADP + phosphate + H(+). In terms of biological role, DNA helicase that possesses intrinsic ATP-dependent nucleosome-remodeling activity and is both required for DNA repair and heterochromatin organization. Promotes DNA end resection of double-strand breaks (DSBs) following DNA damage: probably acts by weakening histone DNA interactions in nucleosomes flanking DSBs, facilitating single-stranded DNA (ssDNA) production by the EXO1 and SGS1 machinery. Promotes gene silencing at heterochromatin by regulating the chromatin structure within or around silent loci. Also required for heterochromatin organization at centromeres. The sequence is that of ATP-dependent helicase FUN30 (FUN30) from Saccharomyces cerevisiae (strain ATCC 204508 / S288c) (Baker's yeast).